We begin with the raw amino-acid sequence, 468 residues long: Malate-2H(+)/Na(+)-lactate antiporter (468 aa).

A run of 12 helical transmembrane segments spans residues 9–29, 30–50, 73–93, 96–116, 136–156, 192–212, 233–253, 258–278, 309–329, 357–377, 405–425, and 428–448; these read LFEI…FTVF, LDLP…LLGI, AVLI…GGVV, LIYY…TLII, IAMI…AGAI, LYLS…VGFM, TFDI…LLAM, MPVI…FQGM, IVGM…GGLL, LIVA…LILT, LTSG…ILGV, and FSYL…IIYG.

This sequence belongs to the NhaC Na(+)/H(+) (TC 2.A.35) antiporter family.

It is found in the cell membrane. In terms of biological role, couples proton uptake and Na(+) efflux to the substrate-product malate/lactate antiport, in an electroneutral malate-2H(+)/Na(+)-lactate exchange. Plays a role in supporting growth to high density on malate at reduced protonmotive force. The chain is Malate-2H(+)/Na(+)-lactate antiporter (mleN) from Bacillus subtilis (strain 168).